The primary structure comprises 447 residues: MTKQIITLVGRPNVGKSTLFNRLSIRKKAIVHDLPGVTRDRKYTDGKIGSFEFLLIDTPGLDEHPNSMGERLIEQTTKAILEADLICFMVDARSGILPDDKLLSSFVRKYNKPAILVVNKCEKAFDFDKEYYKLGFDSMIAISAEHGTGLIDLYDEIIAKLPEEESIETNIADPIKGDCLQIVVSGRPNAGKSTFINALINDERLLTGPEAGITRESIEIDWQYKNNHIKLIDTAGLRKKSTITESLEKLSASDTINSIKLANTVILMIDALAPLKQQDLNIASHVVNEGRSIVIVVNKWDLVKESEKEAFQEEFYYQINTHLPQVKGIPVLFISAINKQNIEQVLDACLKIYKIWNKKITTSKLNEWLNFTTEAHLLPLQKGGRRVRVKYMTQTKTRPPTFKLFSNNPEKITDSYTRYLVNNMREAFDMPGVPIRFTYVKTKNPYV.

2 consecutive EngA-type G domains span residues 4–165 and 180–357; these read QIIT…PEEE and LQIV…KIWN. Residues 10–17, 57–61, 119–122, 186–193, 233–237, and 298–301 contribute to the GTP site; these read GRPNVGKS, DTPGL, NKCE, GRPNAGKS, DTAGL, and NKWD. One can recognise a KH-like domain in the interval 358–443; the sequence is KKITTSKLNE…PIRFTYVKTK (86 aa).

It belongs to the TRAFAC class TrmE-Era-EngA-EngB-Septin-like GTPase superfamily. EngA (Der) GTPase family. As to quaternary structure, associates with the 50S ribosomal subunit.

In terms of biological role, GTPase that plays an essential role in the late steps of ribosome biogenesis. The sequence is that of GTPase Der from Rickettsia rickettsii (strain Iowa).